A 96-amino-acid polypeptide reads, in one-letter code: Large ribosomal subunit protein uL15 (96 aa).

This sequence belongs to the universal ribosomal protein uL15 family. Part of the 50S ribosomal subunit.

In terms of biological role, binds to the 23S rRNA. The protein is Large ribosomal subunit protein uL15 (rplO) of Streptomyces scabiei.